Reading from the N-terminus, the 46-residue chain is MTKRTLQGSKRKKIRVSGFRARMKTPCGRSILNSRRRKGRKKIMVS.

Belongs to the bacterial ribosomal protein bL34 family.

Its subcellular location is the plastid. The protein resides in the chloroplast. The sequence is that of Large ribosomal subunit protein bL34c from Pyropia yezoensis (Susabi-nori).